Here is a 592-residue protein sequence, read N- to C-terminus: BTB/POZ domain-containing protein At5g03250 (592 aa).

The BTB domain occupies 28–98 (SDVTIEVGDM…CYGVKIELTA (71 aa)). Residues 217-502 (DWWFDDASFL…VQVLFFEQLR (286 aa)) enclose the NPH3 domain. Y443 bears the Phosphotyrosine mark.

The protein belongs to the NPH3 family.

It functions in the pathway protein modification; protein ubiquitination. Functionally, may act as a substrate-specific adapter of an E3 ubiquitin-protein ligase complex (CUL3-RBX1-BTB) which mediates the ubiquitination and subsequent proteasomal degradation of target proteins. The protein is BTB/POZ domain-containing protein At5g03250 of Arabidopsis thaliana (Mouse-ear cress).